The chain runs to 234 residues: Orotidine 5'-phosphate decarboxylase (234 aa).

Residues aspartate 14, lysine 36, 63–72 (DLKFHDIPNT), threonine 123, arginine 184, glutamine 193, glycine 213, and arginine 214 contribute to the substrate site. Catalysis depends on lysine 65, which acts as the Proton donor.

Belongs to the OMP decarboxylase family. Type 1 subfamily. Homodimer.

The enzyme catalyses orotidine 5'-phosphate + H(+) = UMP + CO2. It functions in the pathway pyrimidine metabolism; UMP biosynthesis via de novo pathway; UMP from orotate: step 2/2. Catalyzes the decarboxylation of orotidine 5'-monophosphate (OMP) to uridine 5'-monophosphate (UMP). The protein is Orotidine 5'-phosphate decarboxylase of Psychromonas ingrahamii (strain DSM 17664 / CCUG 51855 / 37).